The primary structure comprises 609 residues: Phosphoprotein 85 (609 aa).

Residues 461-609 (QNEGRASSRA…RSTETNDERL (149 aa)) form a disordered region. Residues 465–478 (RASSRASSSHSTST) are compositionally biased toward low complexity. The segment covering 484-495 (PQSGRSTPTSIL) has biased composition (polar residues). 2 stretches are compositionally biased toward low complexity: residues 503 to 513 (SNSRSSSVSFS) and 552 to 563 (SPQSASSNNSMS). A compositionally biased stretch (basic and acidic residues) spans 600-609 (RSTETNDERL).

The protein belongs to the herpesviridae pp85 family. In terms of processing, phosphorylated.

It localises to the virion tegument. The protein localises to the host cytoplasm. This is Phosphoprotein 85 (U14) from Homo sapiens (Human).